The sequence spans 356 residues: Protein-arginine kinase (356 aa).

The region spanning 24 to 254 (IVLSSRIRLA…MQLIQQERAA (231 aa)) is the Phosphagen kinase C-terminal domain. ATP is bound by residues 27–31 (SSRIR), histidine 91, arginine 125, 176–180 (RASVM), and 207–212 (RGIYGE). The short motif at 337 to 342 (RDERRA) is the RDXXRA motif of the pArg binding pocket involved in allosteric regulation element.

It belongs to the ATP:guanido phosphotransferase family.

It catalyses the reaction L-arginyl-[protein] + ATP = N(omega)-phospho-L-arginyl-[protein] + ADP + H(+). With respect to regulation, appears to be allosterically activated by the binding of pArg-containing polypeptides to the pArg-binding pocket localized in the C-terminal domain of McsB. Its function is as follows. Catalyzes the specific phosphorylation of arginine residues in a large number of proteins. Is part of the bacterial stress response system. Protein arginine phosphorylation has a physiologically important role and is involved in the regulation of many critical cellular processes, such as protein homeostasis, motility, competence, and stringent and stress responses, by regulating gene expression and protein activity. The chain is Protein-arginine kinase from Halalkalibacterium halodurans (strain ATCC BAA-125 / DSM 18197 / FERM 7344 / JCM 9153 / C-125) (Bacillus halodurans).